Consider the following 762-residue polypeptide: Polyadenylate-binding protein, cytoplasmic and nuclear (762 aa).

The segment at threonine 39–glutamine 58 is disordered. Over residues proline 48–glutamine 58 the composition is skewed to low complexity. 4 consecutive RRM domains span residues alanine 61–arginine 139, glycine 149–proline 226, threonine 242–lysine 320, and valine 346–arginine 470. Disordered stretches follow at residues lysine 376–leucine 429, serine 596–proline 663, and valine 740–alanine 762. Over residues glycine 389–serine 425 the composition is skewed to basic and acidic residues. A compositionally biased stretch (gly residues) spans glycine 600–glutamine 612. Residues alanine 645 to proline 663 are compositionally biased toward low complexity. A PABC domain is found at glutamate 664 to arginine 741. Residues serine 753–alanine 762 show a composition bias toward basic and acidic residues.

This sequence belongs to the polyadenylate-binding protein type-1 family.

It is found in the cytoplasm. The protein localises to the nucleus. In terms of biological role, binds the poly(A) tail of mRNA. Appears to be an important mediator of the multiple roles of the poly(A) tail in mRNA biogenesis, stability and translation. In the nucleus, involved in both mRNA cleavage and polyadenylation. Is also required for efficient mRNA export to the cytoplasm. Acts in concert with a poly(A)-specific nuclease (PAN) to affect poly(A) tail shortening, which may occur concomitantly with either nucleocytoplasmic mRNA transport or translational initiation. In the cytoplasm, stimulates translation initiation and regulates mRNA decay through translation termination-coupled poly(A) shortening, probably mediated by PAN. The polypeptide is Polyadenylate-binding protein, cytoplasmic and nuclear (PAB1) (Pyricularia oryzae (strain 70-15 / ATCC MYA-4617 / FGSC 8958) (Rice blast fungus)).